A 157-amino-acid polypeptide reads, in one-letter code: Regulatory protein RecX (157 aa).

The protein belongs to the RecX family.

It localises to the cytoplasm. In terms of biological role, modulates RecA activity. The protein is Regulatory protein RecX of Leptothrix cholodnii (strain ATCC 51168 / LMG 8142 / SP-6) (Leptothrix discophora (strain SP-6)).